The following is a 254-amino-acid chain: Phosphoribosylaminoimidazole-succinocarboxamide synthase (254 aa).

The protein belongs to the SAICAR synthetase family.

It carries out the reaction 5-amino-1-(5-phospho-D-ribosyl)imidazole-4-carboxylate + L-aspartate + ATP = (2S)-2-[5-amino-1-(5-phospho-beta-D-ribosyl)imidazole-4-carboxamido]succinate + ADP + phosphate + 2 H(+). It functions in the pathway purine metabolism; IMP biosynthesis via de novo pathway; 5-amino-1-(5-phospho-D-ribosyl)imidazole-4-carboxamide from 5-amino-1-(5-phospho-D-ribosyl)imidazole-4-carboxylate: step 1/2. The chain is Phosphoribosylaminoimidazole-succinocarboxamide synthase from Brucella abortus (strain S19).